Reading from the N-terminus, the 394-residue chain is Enoyl-CoA delta isomerase 2 (394 aa).

Residues 1-38 (MAMAYLAWRLARRSCPSSLQVTSFPVVQLHMNRTAMRA) constitute a mitochondrion transit peptide. One can recognise an ACB domain in the interval 39–124 (SQKDFENSMN…VSSLSPSLES (86 aa)). Lys-51 bears the N6-acetyllysine; alternate mark. Lys-51 bears the N6-succinyllysine; alternate mark. Lys-55 is subject to N6-succinyllysine. Lys-62 bears the N6-acetyllysine; alternate mark. Residue Lys-62 is modified to N6-succinyllysine; alternate. 66–70 (YALYK) is a binding site for an acyl-CoA. N6-succinyllysine occurs at positions 70, 81, and 90. An N6-acetyllysine; alternate modification is found at Lys-92. Lys-92 is subject to N6-succinyllysine; alternate. Residue Lys-92 coordinates an acyl-CoA. Position 101 is a phosphoserine (Ser-101). Tyr-111 is an an acyl-CoA binding site. Position 119 is a phosphoserine (Ser-119). An ECH-like region spans residues 151 to 322 (TKIMFNRPKK…AQGLVTEVFP (172 aa)). Lys-161 carries the post-translational modification N6-succinyllysine. A substrate-binding site is contributed by 198 to 202 (SGNDL). Residue Lys-289 is modified to N6-succinyllysine. The Microbody targeting signal motif lies at 392–394 (SKL).

It in the C-terminal section; belongs to the enoyl-CoA hydratase/isomerase family. In terms of tissue distribution, abundant in heart, skeletal muscle and liver. Expressed in CD34(+) T-cells and CD34(+) bone marrow cells.

It is found in the mitochondrion. The protein resides in the peroxisome matrix. The enzyme catalyses a (3Z)-enoyl-CoA = a 4-saturated (2E)-enoyl-CoA. It catalyses the reaction (3Z)-octenoyl-CoA = (2E)-octenoyl-CoA. It carries out the reaction a (3E)-enoyl-CoA = a 4-saturated (2E)-enoyl-CoA. The catalysed reaction is (2E)-tetradecenoyl-CoA = (3Z)-tetradecenoyl-CoA. The enzyme catalyses (3E)-tetradecenoyl-CoA = (2E)-tetradecenoyl-CoA. It catalyses the reaction (3E)-octenoyl-CoA = (2E)-octenoyl-CoA. It carries out the reaction (3E)-nonenoyl-CoA = (2E)-nonenoyl-CoA. The protein operates within lipid metabolism; fatty acid beta-oxidation. In terms of biological role, able to isomerize both 3-cis and 3-trans double bonds into the 2-trans form in a range of enoyl-CoA species. Has a preference for 3-trans substrates. The polypeptide is Enoyl-CoA delta isomerase 2 (ECI2) (Homo sapiens (Human)).